We begin with the raw amino-acid sequence, 337 residues long: Probable dual-specificity RNA methyltransferase RlmN (337 aa).

Glutamate 88 serves as the catalytic Proton acceptor. Positions 94 to 322 constitute a Radical SAM core domain; sequence SSDRLTVCVS…ASIRRSRGLD (229 aa). An intrachain disulfide couples cysteine 101 to cysteine 327. Cysteine 108, cysteine 112, and cysteine 115 together coordinate [4Fe-4S] cluster. S-adenosyl-L-methionine contacts are provided by residues 155-156, serine 185, 208-210, and asparagine 284; these read GE and SLH. The S-methylcysteine intermediate role is filled by cysteine 327.

The protein belongs to the radical SAM superfamily. RlmN family. It depends on [4Fe-4S] cluster as a cofactor.

It is found in the cytoplasm. The catalysed reaction is adenosine(2503) in 23S rRNA + 2 reduced [2Fe-2S]-[ferredoxin] + 2 S-adenosyl-L-methionine = 2-methyladenosine(2503) in 23S rRNA + 5'-deoxyadenosine + L-methionine + 2 oxidized [2Fe-2S]-[ferredoxin] + S-adenosyl-L-homocysteine. It catalyses the reaction adenosine(37) in tRNA + 2 reduced [2Fe-2S]-[ferredoxin] + 2 S-adenosyl-L-methionine = 2-methyladenosine(37) in tRNA + 5'-deoxyadenosine + L-methionine + 2 oxidized [2Fe-2S]-[ferredoxin] + S-adenosyl-L-homocysteine. Its function is as follows. Specifically methylates position 2 of adenine 2503 in 23S rRNA and position 2 of adenine 37 in tRNAs. This is Probable dual-specificity RNA methyltransferase RlmN from Thermosynechococcus vestitus (strain NIES-2133 / IAM M-273 / BP-1).